We begin with the raw amino-acid sequence, 524 residues long: Rho guanine nucleotide exchange factor 3 (524 aa).

Positions 75-98 (SDSRPDLFSPRPWSRNTPAANTKR) are disordered. Positions 121 to 303 (IKRQEAIFEL…IQGIVAEINI (183 aa)) constitute a DH domain. Positions 290–448 (AINIIQGIVA…QWLNCIRQAK (159 aa)) constitute a PH domain.

Its subcellular location is the cytoplasm. Its function is as follows. Acts as a guanine nucleotide exchange factor (GEF) for RhoA and RhoB GTPases. In Gallus gallus (Chicken), this protein is Rho guanine nucleotide exchange factor 3 (Arhgef3).